Reading from the N-terminus, the 883-residue chain is Phosphoenolpyruvate carboxylase (883 aa).

Catalysis depends on residues His-138 and Lys-546.

It belongs to the PEPCase type 1 family. Requires Mg(2+) as cofactor.

The catalysed reaction is oxaloacetate + phosphate = phosphoenolpyruvate + hydrogencarbonate. Forms oxaloacetate, a four-carbon dicarboxylic acid source for the tricarboxylic acid cycle. This is Phosphoenolpyruvate carboxylase from Salmonella dublin (strain CT_02021853).